We begin with the raw amino-acid sequence, 255 residues long: Glutamate racemase (255 aa).

Substrate contacts are provided by residues 7-8 (DS) and 39-40 (YG). The active-site Proton donor/acceptor is C70. Residue 71–72 (NT) participates in substrate binding. The Proton donor/acceptor role is filled by C181. 182–183 (TH) contacts substrate.

The protein belongs to the aspartate/glutamate racemases family. As to quaternary structure, homodimer.

The enzyme catalyses L-glutamate = D-glutamate. It functions in the pathway cell wall biogenesis; peptidoglycan biosynthesis. In terms of biological role, provides the (R)-glutamate required for cell wall biosynthesis. The sequence is that of Glutamate racemase from Helicobacter pylori (strain J99 / ATCC 700824) (Campylobacter pylori J99).